The chain runs to 228 residues: DNA repair and recombination protein RadB (228 aa).

Belongs to the eukaryotic RecA-like protein family. RadB subfamily.

In terms of biological role, involved in DNA repair and in homologous recombination. May regulate the cleavage reactions of the branch-structured DNA. Has a very weak ATPase activity that is not stimulated by DNA. Binds DNA but does not promote DNA strands exchange. This chain is DNA repair and recombination protein RadB, found in Thermococcus sibiricus (strain DSM 12597 / MM 739).